We begin with the raw amino-acid sequence, 374 residues long: Chaperone protein DnaJ (374 aa).

A J domain is found at 5–70; that stretch reads DYYEILEIER…GKRQLYDRYG (66 aa). The segment at 136 to 213 adopts a CR-type zinc-finger fold; the sequence is GCKKEIKIRY…CNGKGHENKE (78 aa). The Zn(2+) site is built by Cys149, Cys152, Cys165, Cys168, Cys187, Cys190, Cys201, and Cys204. CXXCXGXG motif repeat units follow at residues 149–156, 165–172, 187–194, and 201–208; these read CPDCKGTG, CPDCGGRG, CPKCGGSG, and CPKCNGKG.

Belongs to the DnaJ family. In terms of assembly, homodimer. The cofactor is Zn(2+).

It localises to the cytoplasm. Participates actively in the response to hyperosmotic and heat shock by preventing the aggregation of stress-denatured proteins and by disaggregating proteins, also in an autonomous, DnaK-independent fashion. Unfolded proteins bind initially to DnaJ; upon interaction with the DnaJ-bound protein, DnaK hydrolyzes its bound ATP, resulting in the formation of a stable complex. GrpE releases ADP from DnaK; ATP binding to DnaK triggers the release of the substrate protein, thus completing the reaction cycle. Several rounds of ATP-dependent interactions between DnaJ, DnaK and GrpE are required for fully efficient folding. Also involved, together with DnaK and GrpE, in the DNA replication of plasmids through activation of initiation proteins. The sequence is that of Chaperone protein DnaJ from Wolinella succinogenes (strain ATCC 29543 / DSM 1740 / CCUG 13145 / JCM 31913 / LMG 7466 / NCTC 11488 / FDC 602W) (Vibrio succinogenes).